The following is a 1043-amino-acid chain: Sucrose-phosphate synthase 1 (1043 aa).

Positions glutamate 95–threonine 117 are enriched in basic and acidic residues. The disordered stretch occupies residues glutamate 95 to glycine 127. 4 positions are modified to phosphoserine: serine 121, serine 125, serine 152, and serine 155. Positions proline 670 to leucine 693 are disordered.

This sequence belongs to the glycosyltransferase 1 family. In terms of assembly, homodimer or homotetramer. Phosphorylated at Ser-152 upon sucrose supply. In terms of tissue distribution, expressed in seeds, stems, rosette leaves, flowers and siliques. Highly expressed in maturing nectaries.

It catalyses the reaction beta-D-fructose 6-phosphate + UDP-alpha-D-glucose = sucrose 6(F)-phosphate + UDP + H(+). The protein operates within glycan biosynthesis; sucrose biosynthesis; sucrose from D-fructose 6-phosphate and UDP-alpha-D-glucose: step 1/2. Its activity is regulated as follows. Activity is regulated by phosphorylation and moderated by concentration of metabolites and light. Functionally, plays a major role in photosynthetic sucrose synthesis by catalyzing the rate-limiting step of sucrose biosynthesis from UDP-glucose and fructose- 6-phosphate. Involved in the regulation of carbon partitioning in the leaves of plants. May regulate the synthesis of sucrose and therefore play a major role as a limiting factor in the export of photoassimilates out of the leaf. Plays a role for sucrose availability that is essential for plant growth and fiber elongation. Required for nectar secretion. This Arabidopsis thaliana (Mouse-ear cress) protein is Sucrose-phosphate synthase 1 (SPS1).